An 887-amino-acid polypeptide reads, in one-letter code: Kinesin-like protein KIF20A (887 aa).

Serine 2 is modified (N-acetylserine). A phosphoserine mark is found at serine 7, serine 14, and serine 21. Positions 63-506 constitute a Kinesin motor domain; sequence KVKVYLRIRP…AKFSALASQL (444 aa). An ATP-binding site is contributed by 159 to 166; sequence GVTNSGKT. Serine 527 is modified (phosphoserine; by PLK1). The disordered stretch occupies residues 527-553; the sequence is SPQVGPGLEKEDKADSDLEDSPEDEAD. The span at 543 to 553 shows a compositional bias: acidic residues; sequence DLEDSPEDEAD. The stretch at 559 to 804 forms a coiled coil; the sequence is KEELLQVVEA…VLVKLDLQKK (246 aa). Serine 683 and serine 823 each carry phosphoserine. The globular stretch occupies residues 805–887; the sequence is AACIAEQYHT…LLKSPFGKKY (83 aa). Residues 826–875 form a disordered region; sequence KRLGANQENQQPNHQPPGKKPFLRNLLPRTPTCQSSTDSSPYARILRSRH. Threonine 855 carries the phosphothreonine modification. Over residues 856–865 the composition is skewed to polar residues; it reads PTCQSSTDSS. Residues serine 865, serine 876, and serine 881 each carry the phosphoserine modification.

The protein belongs to the TRAFAC class myosin-kinesin ATPase superfamily. Kinesin family. Phosphorylated by PLK1 at Ser-527 during mitosis, creating a docking site for PLK1 and recruiting PLK1 at central spindle. In terms of tissue distribution, ubiquitously expressed, with highest levels in spleen and testis.

It localises to the golgi apparatus. The protein resides in the cytoplasm. The protein localises to the cytoskeleton. Its subcellular location is the spindle. Its function is as follows. Mitotic kinesin required for chromosome passenger complex (CPC)-mediated cytokinesis. Following phosphorylation by PLK1, involved in recruitment of PLK1 to the central spindle. Interacts with guanosine triphosphate (GTP)-bound forms of RAB6A and RAB6B. May act as a motor required for the retrograde RAB6 regulated transport of Golgi membranes and associated vesicles along microtubules. Has a microtubule plus end-directed motility. In Mus musculus (Mouse), this protein is Kinesin-like protein KIF20A (Kif20a).